The sequence spans 122 residues: MIQQESYLNVADNSGAKKLLCIRVLGGGNRRYGSVGDVIIATVKDATPNMPVKKSDVVRAVIVRTRKAIRRESGMSIRFDDNAAVLINQDGNPKGTRVFGPVARELRDKNFTKIVSLAPEVL.

This sequence belongs to the universal ribosomal protein uL14 family. As to quaternary structure, part of the 50S ribosomal subunit. Forms a cluster with proteins L3 and L19. In the 70S ribosome, L14 and L19 interact and together make contacts with the 16S rRNA in bridges B5 and B8.

In terms of biological role, binds to 23S rRNA. Forms part of two intersubunit bridges in the 70S ribosome. The sequence is that of Large ribosomal subunit protein uL14 from Cyanothece sp. (strain PCC 7425 / ATCC 29141).